Here is an 874-residue protein sequence, read N- to C-terminus: Cellulose synthase catalytic subunit [UDP-forming] (874 aa).

4 helical membrane-spanning segments follow: residues 30-50 (SPFS…VFPL), 151-171 (ILGV…TQPF), 173-193 (PLSQ…VRRM), and 230-250 (LVCG…LVLG). The segment at 271-364 (QWPTVDIFVP…FVAIFDCDHV (94 aa)) is catalytic subdomain A. The active site involves D313. Residues D360 and D362 each contribute to the substrate site. The catalytic subdomain B stretch occupies residues 441 to 501 (KPLDEIGGIA…GQRIRWARGM (61 aa)). The active site involves D457. 5 consecutive transmembrane segments (helical) span residues 525 to 545 (LNAM…TAPL), 547 to 567 (FLLL…LFVI), 592 to 612 (IYET…LINP), 634 to 654 (VISR…AAGV), and 668 to 688 (VIVS…AVAV). Positions 694–790 (QVRRAHRVEI…QHIDFVQCTF (97 aa)) constitute a PilZ domain. A helical transmembrane segment spans residues 833 to 853 (SVKVIFRSLTALIAWIVSFIP).

This sequence belongs to the glycosyltransferase 2 family. Mg(2+) is required as a cofactor.

Its subcellular location is the cell inner membrane. The catalysed reaction is [(1-&gt;4)-beta-D-glucosyl](n) + UDP-alpha-D-glucose = [(1-&gt;4)-beta-D-glucosyl](n+1) + UDP + H(+). It participates in glycan metabolism; bacterial cellulose biosynthesis. Its activity is regulated as follows. Activated by bis-(3'-5') cyclic diguanylic acid (c-di-GMP). Functionally, catalytic subunit of cellulose synthase. It polymerizes uridine 5'-diphosphate glucose to cellulose, which is produced as an extracellular component for mechanical and chemical protection at the onset of the stationary phase, when the cells exhibit multicellular behavior (rdar morphotype). Coexpression of cellulose and thin aggregative fimbriae leads to a hydrophobic network with tightly packed cells embedded in a highly inert matrix. The chain is Cellulose synthase catalytic subunit [UDP-forming] (bcsA) from Salmonella typhi.